Consider the following 460-residue polypeptide: Bifunctional protein GlmU (460 aa).

The tract at residues 1-235 is pyrophosphorylase; sequence MTLTAAIVLA…PLSVEGVNDR (235 aa). UDP-N-acetyl-alpha-D-glucosamine is bound by residues 9–12, Lys23, Gln76, and 81–82; these read LAAG and GT. Residue Asp109 coordinates Mg(2+). UDP-N-acetyl-alpha-D-glucosamine contacts are provided by Gly146, Glu161, Asn176, and Asn233. Position 233 (Asn233) interacts with Mg(2+). Positions 236–256 are linker; the sequence is VQLASLAKAHNLRVCRQWMLD. The tract at residues 257–460 is N-acetyltransferase; that stretch reads GVTIVDPQTT…VDNWKPAWER (204 aa). Residues Arg338 and Lys356 each coordinate UDP-N-acetyl-alpha-D-glucosamine. The active-site Proton acceptor is the His368. 2 residues coordinate UDP-N-acetyl-alpha-D-glucosamine: Tyr371 and Asn382. Residues 391–392 and Ala428 each bind acetyl-CoA; that span reads NY.

The protein in the N-terminal section; belongs to the N-acetylglucosamine-1-phosphate uridyltransferase family. It in the C-terminal section; belongs to the transferase hexapeptide repeat family. In terms of assembly, homotrimer. Mg(2+) is required as a cofactor.

It is found in the cytoplasm. It catalyses the reaction alpha-D-glucosamine 1-phosphate + acetyl-CoA = N-acetyl-alpha-D-glucosamine 1-phosphate + CoA + H(+). The enzyme catalyses N-acetyl-alpha-D-glucosamine 1-phosphate + UTP + H(+) = UDP-N-acetyl-alpha-D-glucosamine + diphosphate. Its pathway is nucleotide-sugar biosynthesis; UDP-N-acetyl-alpha-D-glucosamine biosynthesis; N-acetyl-alpha-D-glucosamine 1-phosphate from alpha-D-glucosamine 6-phosphate (route II): step 2/2. The protein operates within nucleotide-sugar biosynthesis; UDP-N-acetyl-alpha-D-glucosamine biosynthesis; UDP-N-acetyl-alpha-D-glucosamine from N-acetyl-alpha-D-glucosamine 1-phosphate: step 1/1. It functions in the pathway bacterial outer membrane biogenesis; LPS lipid A biosynthesis. In terms of biological role, catalyzes the last two sequential reactions in the de novo biosynthetic pathway for UDP-N-acetylglucosamine (UDP-GlcNAc). The C-terminal domain catalyzes the transfer of acetyl group from acetyl coenzyme A to glucosamine-1-phosphate (GlcN-1-P) to produce N-acetylglucosamine-1-phosphate (GlcNAc-1-P), which is converted into UDP-GlcNAc by the transfer of uridine 5-monophosphate (from uridine 5-triphosphate), a reaction catalyzed by the N-terminal domain. In Bifidobacterium animalis subsp. lactis (strain AD011), this protein is Bifunctional protein GlmU.